The chain runs to 164 residues: MIRINYFNENDINMDFWKKFCNKILKTAYNYFNFNYDIELSITFVNDLKAQQINQQYRNHSYIADVTSFPVEMTENEIKAIGFRELGDMFINLNEAKRKAIKYNHDLNSEMGFLFVHGFLHLLGYDHEDSNDEKIMFDLQDQILKLNNLEYIIKFNEDDYLESN.

Histidine 117, histidine 121, and histidine 127 together coordinate Zn(2+).

The protein belongs to the endoribonuclease YbeY family. Zn(2+) serves as cofactor.

The protein localises to the cytoplasm. Single strand-specific metallo-endoribonuclease involved in late-stage 70S ribosome quality control and in maturation of the 3' terminus of the 16S rRNA. The sequence is that of Endoribonuclease YbeY from Mycoplasma mycoides subsp. mycoides SC (strain CCUG 32753 / NCTC 10114 / PG1).